A 144-amino-acid chain; its full sequence is Large ribosomal subunit protein uL16 (144 aa).

Belongs to the universal ribosomal protein uL16 family. Part of the 50S ribosomal subunit.

In terms of biological role, binds 23S rRNA and is also seen to make contacts with the A and possibly P site tRNAs. In Halothermothrix orenii (strain H 168 / OCM 544 / DSM 9562), this protein is Large ribosomal subunit protein uL16.